Reading from the N-terminus, the 417-residue chain is Solute carrier family 25 member 46-A (417 aa).

Basic and acidic residues predominate over residues 1–13 (MQPRRPDRFDGLE). The interval 1–90 (MQPRRPDRFD…AFGEENSNSA (90 aa)) is disordered. Positions 31-41 (SSFPARSFSSS) are enriched in low complexity. Residues 95-186 (QLNRFAGFGI…GILSEFTHLP (92 aa)) form a Solcar 1 repeat. A run of 6 helical transmembrane segments spans residues 102–122 (FGIG…CIVL), 162–182 (MGST…LSEF), 198–218 (IGGH…FYSA), 257–277 (LLPL…HYIV), 313–333 (FPEL…LYPL), and 382–402 (LGFY…AIVL). One copy of the Solcar 2 repeat lies at 310–415 (EDYFPELIAN…KIIYSSVVQT (106 aa)).

The protein belongs to the mitochondrial carrier (TC 2.A.29) family.

It is found in the mitochondrion outer membrane. In terms of biological role, may play a role in mitochondrial dynamics by controlling mitochondrial membrane fission. This chain is Solute carrier family 25 member 46-A (slc25a46-a), found in Xenopus laevis (African clawed frog).